Here is a 361-residue protein sequence, read N- to C-terminus: Chorismate synthase (361 aa).

The NADP(+) site is built by R48 and R54. FMN-binding positions include 131-133 (RSS), 243-244 (NA), G287, 302-306 (KPTSS), and R328.

This sequence belongs to the chorismate synthase family. Homotetramer. Requires FMNH2 as cofactor.

It carries out the reaction 5-O-(1-carboxyvinyl)-3-phosphoshikimate = chorismate + phosphate. It participates in metabolic intermediate biosynthesis; chorismate biosynthesis; chorismate from D-erythrose 4-phosphate and phosphoenolpyruvate: step 7/7. Functionally, catalyzes the anti-1,4-elimination of the C-3 phosphate and the C-6 proR hydrogen from 5-enolpyruvylshikimate-3-phosphate (EPSP) to yield chorismate, which is the branch point compound that serves as the starting substrate for the three terminal pathways of aromatic amino acid biosynthesis. This reaction introduces a second double bond into the aromatic ring system. This chain is Chorismate synthase, found in Rhodopseudomonas palustris (strain BisB5).